A 431-amino-acid chain; its full sequence is Indole diterpene prenyltransferase nodD1 (431 aa).

Residue 85–86 participates in L-tryptophan binding; sequence FI. Substrate-binding residues include arginine 107, lysine 194, arginine 268, lysine 270, tyrosine 272, and tyrosine 353.

It belongs to the tryptophan dimethylallyltransferase family.

The protein operates within secondary metabolite biosynthesis. Indole diterpene prenyltransferase; part of the gene cluster that mediates the biosynthesis of the indole diterpenes nodulisporic acids (NA). Nodulisporic acid A (NAA) and its chemically modified derivatives are of particular significance because of their highly potent insecticidal activity against blood-feeding arthropods and lack of observable adverse effects on mammals, in particular the tremogenicity associated with the paspaline-derived IDTs is not observed. The geranylgeranyl diphosphate (GGPP) synthase ggs1, localized outside of the cluster, is proposed to catalyze the first step in nodulisporic acid biosynthesis via conversion of farnesyl pyrophosphate and isopentyl pyrophosphate into geranylgeranyl pyrophosphate (GGPP). Condensation of indole-3-glycerol phosphate with GGPP by the prenyl transferase nodC then forms 3-geranylgeranylindole (3-GGI). Epoxidation by the FAD-dependent monooxygenase nodM leads to a single-epoxidized-GGI that is substrate of the terpene cyclase nodB for cyclization to yield emindole SB. The terminal methyl carbon, C28, of emindole SB is then oxidized by the cytochrome P450 monooxygenase nodW to produce nodulisporic acid F (NAF), the pentacyclic core of NAA. NAF is converted to nodulisporic acid E (NAE) via prenylation. This step is probably performed by one of the indole diterpene prenyltransferases nodD1 or nodD2. Several oxidation steps performed by the FAD-linked oxidoreductase nodO and one of the cytochrome P450 monooxygenase nodR, nodX or nodZ further convert NAE to nodulisporic acid D (NAD). NAD is substrate of cytochrome P450 monooxygenase nodJ to produce the precursor of nodulisporic acid C (NAC), converted to NAC by one of the indole diterpene prenyltransferases nodD1 or nodD2. The FAD-dependent monooxygenase nodY2 then oxidizes NAC to nodulisporic acid B (NAB). Finally NAB is converted to NAA by one of the cytochrome P450 monooxygenases nodR, nodX or nodZ. This chain is Indole diterpene prenyltransferase nodD1, found in Hypoxylon pulicicidum.